The primary structure comprises 121 residues: Basic phospholipase A2 homolog zhaoermiatoxin (121 aa).

Intrachain disulfides connect C26–C115, C28–C44, C43–C95, C49–C121, C50–C88, C57–C81, and C75–C86.

This sequence belongs to the phospholipase A2 family. Group II subfamily. R49 sub-subfamily. As to quaternary structure, homodimer. In terms of tissue distribution, expressed by the venom gland.

The protein resides in the secreted. In terms of biological role, snake venom phospholipase A2 homolog that induces myonecrosis, and edema. Has low myotoxic activity. This Protobothrops mangshanensis (Mangshan pitviper) protein is Basic phospholipase A2 homolog zhaoermiatoxin.